A 274-amino-acid chain; its full sequence is Single-stranded DNA-binding protein WHY1, chloroplastic (274 aa).

The N-terminal 54 residues, 1–54 (MSNFSLSPSPTSGFSLNLQNPTKTSYLSFSSSINTIFAPLSSNTTKSFSGLTHK), are a transit peptide targeting the chloroplast. The required for ssDNA binding stretch occupies residues 100 to 105 (KGKAAL). A Nuclear localization signal motif is present at residues 178–191 (KGRSDEGRVRKVLK). Positions 253-274 (PEDASRSNNANPRSGAELEWNR) are disordered.

This sequence belongs to the Whirly family. Homotetramer.

It localises to the nucleus. The protein localises to the plastid. The protein resides in the chloroplast. In terms of biological role, single-stranded DNA-binding protein that acts as a transcriptional activator of the pathogenesis-related gene PR-10a. Upon elicitation, binds a 30bp promoter sequence known as elicitor element response (ERE) and is required for PR-10a expression. This is Single-stranded DNA-binding protein WHY1, chloroplastic (WHY1) from Solanum tuberosum (Potato).